The following is a 1453-amino-acid chain: MIVLILCLLLFSYNSVICTSNNDCVQGNVTQLPGNENIIKDFLFHTFKEEPSVVVGGYYPTEVWYNCSRSATTTAYKDFSNIHAFYFDMEAMENSTGNARGKPLLVHVHGDPVSIIIYISAYRDDVQPRPLLKHGLLCITKNKIIDYNTFTSAQWSAICLGDDRKIPFSVIPTDNGTKIFGLEWNDDYVTAYISDRSHHLNINNNWFNNVTILYSRSSSATWQKSAAYVYQGVSNFTYYKLNNTNGLKSYELCEDYEYCTGYATNVFAPTVGGYIPHGFSFNNWFMRTNSSTFVSGRFVTNQPLLVNCLWPVPSFGVAAQQFCFEGAQFSQCNGVSLNNTVDVIRFNLNFTALVQSGMGATVFSLNTTGGVILEISCYNDTVSESSFYSYGEISFGVTDGPRYCFALYNGTALKYLGTLPPSVKEIAISKWGHFYINGYNFFSTFPIDCISFNLTTGDSGAFWTIAYTSYTDALVQVENTAIKKVTYCNSHINNIKCSQLTANLQNGFYPVASSEVGLVNKSVVLLPSFYSHTSVNITIDLGMKRSGYGQPIASTLSNITLPMQDNNTDVYCIRSNRFSVYFHSTCKSSLWDDVFNSDCTDVLYATAVIKTGTCPFSFDKLNNYLTFNKFCLSLNPVGANCKFDVAARTRTNEQVVRSLYVIYEEGDNIVGVPSDNSGLHDLSVLHLDSCTDYNIYGITGVGIIRQTNSTLLSGLYYTSLSGDLLGFKNVSDGVIYSVTPCDVSAHAAVIDGAIVGAMTSINSELLGLTHWTTTPNFYYYSIYNYTNERTRGTAIDSNDVDCEPIITYSNIGVCKNGALVFINVTHSDGDVQPISTGNVTIPTNFTISVQVEYIQVYTTPVSIDCSRYVCNGNPRCNKLLTQYVSACQTIEQALAMGARLENMEIDSMLFVSENALKLASVEAFNSTETLDPIYKEWPNIGGSWLGGLKDILPSHNSKRKYRSAIEDLLFDKVVTSGLGTVDEDYKRCTGGYDIADLVCAQYYNGIMVLPGVANDDKMAMYTASLAGGITLGSLGGGAVSIPFAIAVQARLNYVALQTDVLNKNQQILANAFNQAIGNITQAFGKVNDAIHQTSQGLATVAKVLAKVQDVVNTQGQALSHLTLQLQNNFQAISSSISDIYNRLDELSADAQVDRLITGRLTALNAFVSQTLTRQAEVRASRQLAKDKVNECVRSQSQRFGFCGNGTHLFSLANAAPNGMIFFHTVLLPTAYETVTAWSGICASDGDRTFGLVVKDVQLTLFRNLDDKFYLTPRTMYQPIVATSSDFVQIEGCDVLFVNATVIDLPSIIPDYIDINQTVQDILENFRPNWTVPELPLDIFNATYLNLTGEINDLEFRSEKLHNTTVELAILIDNINNTLVNLEWLNRIETYVKWPWYVWLLIGLVVIFCIPILLFCCCSTGCCGCIGCLGSCCHSICSRRQFESYEPIEKVHVH.

A signal peptide spans methionine 1–glutamine 31. S1 stretches follow at residues threonine 19 to arginine 791 and leucine 32 to tyrosine 780. At leucine 32–proline 1394 the chain is on the virion surface side. Positions valine 661–isoleucine 805 are interaction with host ANPEP. 2 S2 regions span residues serine 781–histidine 1453 and alanine 794–histidine 1453. Residues alanine 1026 to valine 1047 are fusion peptide. The segment at isoleucine 1041–leucine 1160 is heptad repeat 1 (HR1). Coiled-coil stretches lie at residues glutamine 1108–valine 1152 and threonine 1342–leucine 1384. A heptad repeat 2 (HR2) region spans residues proline 1309–isoleucine 1406. The chain crosses the membrane as a helical span at residues tryptophan 1395–phenylalanine 1414. The Intravirion portion of the chain corresponds to cysteine 1415 to histidine 1453. A KxHxx motif is present at residues lysine 1449–histidine 1453.

It belongs to the alphacoronaviruses spike protein family. Homotrimer. During virus morphogenesis, found in a complex with M and HE proteins. Interacts with host ANPEP.

It is found in the virion membrane. The protein resides in the host endoplasmic reticulum-Golgi intermediate compartment membrane. Functionally, S1 region attaches the virion to the cell membrane by interacting with host ANPEP/aminopeptidase N, initiating the infection. Binding to the receptor probably induces conformational changes in the S glycoprotein unmasking the fusion peptide of S2 region and activating membranes fusion. S2 region belongs to the class I viral fusion protein. Under the current model, the protein has at least 3 conformational states: pre-fusion native state, pre-hairpin intermediate state, and post-fusion hairpin state. During viral and target cell membrane fusion, the coiled coil regions (heptad repeats) regions assume a trimer-of-hairpins structure, positioning the fusion peptide in close proximity to the C-terminal region of the ectodomain. The formation of this structure appears to drive apposition and subsequent fusion of viral and target cell membranes. The polypeptide is Spike glycoprotein (Canis lupus familiaris (Dog)).